We begin with the raw amino-acid sequence, 309 residues long: Dihydroorotate dehydrogenase B (NAD(+)), catalytic subunit (309 aa).

FMN is bound by residues serine 21 and 45–46; that span reads KA. Residues lysine 45 and 69-73 each bind substrate; that span reads NAIGL. 2 residues coordinate FMN: asparagine 99 and asparagine 127. Residue asparagine 127 participates in substrate binding. Cysteine 130 functions as the Nucleophile in the catalytic mechanism. 2 residues coordinate FMN: lysine 165 and isoleucine 191. Residue 192-193 coordinates substrate; that stretch reads NT. FMN is bound by residues glycine 217, 243–244, and 265–266; these read GG and GT.

It belongs to the dihydroorotate dehydrogenase family. Type 1 subfamily. As to quaternary structure, heterotetramer of 2 PyrK and 2 PyrD type B subunits. FMN is required as a cofactor.

It is found in the cytoplasm. The enzyme catalyses (S)-dihydroorotate + NAD(+) = orotate + NADH + H(+). The protein operates within pyrimidine metabolism; UMP biosynthesis via de novo pathway; orotate from (S)-dihydroorotate (NAD(+) route): step 1/1. Its function is as follows. Catalyzes the conversion of dihydroorotate to orotate with NAD(+) as electron acceptor. This chain is Dihydroorotate dehydrogenase B (NAD(+)), catalytic subunit (pyrD), found in Bacillus cytotoxicus (strain DSM 22905 / CIP 110041 / 391-98 / NVH 391-98).